Reading from the N-terminus, the 546-residue chain is Putative serine/threonine-protein kinase L268 (546 aa).

The Cyclin N-terminal domain maps to 1 to 112 (MVCFSKYSGI…ILQTLDFHLV (112 aa)). The region spanning 260–544 (ITVVKNLGEG…QTLEEFNKFN (285 aa)) is the Protein kinase domain. Residues 266–274 (LGEGTYGTV) and lysine 287 each bind ATP. Aspartate 389 acts as the Proton acceptor in catalysis.

This sequence belongs to the protein kinase superfamily. Ser/Thr protein kinase family.

The catalysed reaction is L-seryl-[protein] + ATP = O-phospho-L-seryl-[protein] + ADP + H(+). It catalyses the reaction L-threonyl-[protein] + ATP = O-phospho-L-threonyl-[protein] + ADP + H(+). This is Putative serine/threonine-protein kinase L268 from Acanthamoeba polyphaga mimivirus (APMV).